The chain runs to 584 residues: DNA ligase (584 aa).

ATP is bound at residue Glu-249. Catalysis depends on Lys-251, which acts as the N6-AMP-lysine intermediate. ATP-binding residues include Arg-256, Arg-271, Glu-301, Phe-341, Arg-416, and Lys-422.

The protein belongs to the ATP-dependent DNA ligase family. Mg(2+) serves as cofactor.

The enzyme catalyses ATP + (deoxyribonucleotide)n-3'-hydroxyl + 5'-phospho-(deoxyribonucleotide)m = (deoxyribonucleotide)n+m + AMP + diphosphate.. In terms of biological role, DNA ligase that seals nicks in double-stranded DNA during DNA replication, DNA recombination and DNA repair. This Pyrobaculum arsenaticum (strain DSM 13514 / JCM 11321 / PZ6) protein is DNA ligase.